The following is an 83-amino-acid chain: Exodeoxyribonuclease 7 small subunit (83 aa).

The protein belongs to the XseB family. In terms of assembly, heterooligomer composed of large and small subunits.

The protein resides in the cytoplasm. It carries out the reaction Exonucleolytic cleavage in either 5'- to 3'- or 3'- to 5'-direction to yield nucleoside 5'-phosphates.. Functionally, bidirectionally degrades single-stranded DNA into large acid-insoluble oligonucleotides, which are then degraded further into small acid-soluble oligonucleotides. The chain is Exodeoxyribonuclease 7 small subunit from Rhodopseudomonas palustris (strain ATCC BAA-98 / CGA009).